Reading from the N-terminus, the 717-residue chain is Probable E3 ubiquitin-protein ligase WAVH2 (717 aa).

Polar residues-rich tracts occupy residues 13-28 (VSSN…SLHT) and 85-94 (RTTSNATPRT). Residues 13-120 (VSSNQDKPQQ…SSSSSSSQGG (108 aa)) are disordered. Over residues 95–117 (SNSSSPKFFSNPSSPKSSSSSSS) the composition is skewed to low complexity. The segment at 140-184 (CAICLQRVNSNQSNSTAAIFTAECSHSFHLSCVNGLEDKRCPFCS) adopts an RING-type; atypical zinc-finger fold. Residues 326 to 456 (DLVTVLDLSN…LNATRIPFVV (131 aa)) form the VWFA domain.

Expressed in root tips, cotyledons, leaf primordia and hypocotyls.

It carries out the reaction S-ubiquitinyl-[E2 ubiquitin-conjugating enzyme]-L-cysteine + [acceptor protein]-L-lysine = [E2 ubiquitin-conjugating enzyme]-L-cysteine + N(6)-ubiquitinyl-[acceptor protein]-L-lysine.. Its function is as follows. Probable E3 ubiquitin-protein ligase involved in the regulation of root growth. Acts as a positive regulator of root gravitropism. This chain is Probable E3 ubiquitin-protein ligase WAVH2, found in Arabidopsis thaliana (Mouse-ear cress).